A 140-amino-acid polypeptide reads, in one-letter code: Putative pre-16S rRNA nuclease (140 aa).

It belongs to the YqgF nuclease family.

Its subcellular location is the cytoplasm. In terms of biological role, could be a nuclease involved in processing of the 5'-end of pre-16S rRNA. In Mycoplasma pneumoniae (strain ATCC 29342 / M129 / Subtype 1) (Mycoplasmoides pneumoniae), this protein is Putative pre-16S rRNA nuclease.